The following is a 160-amino-acid chain: Large ribosomal subunit protein uL22c (160 aa).

It belongs to the universal ribosomal protein uL22 family. In terms of assembly, part of the 50S ribosomal subunit.

The protein localises to the plastid. It is found in the chloroplast. In terms of biological role, this protein binds specifically to 23S rRNA. The globular domain of the protein is located near the polypeptide exit tunnel on the outside of the subunit, while an extended beta-hairpin is found that lines the wall of the exit tunnel in the center of the 70S ribosome. This Nasturtium officinale (Watercress) protein is Large ribosomal subunit protein uL22c (rpl22).